The following is a 168-amino-acid chain: MRTHFMKNQSVKRNQHVSTPAIPASICADGLISELVHNEDHPGMTQLLLLPLLQQLGTQSRWQLWLTSQQKLSRDWLLRSGLPLDKVMQSPYCGTITTVEAMIKALQTGNYSVVLGWLADEISETERKRLQQAAKSGQALGLIMRSECNVLPSARPLHGLRIQSSLYH.

The interval 105 to 111 (ALQTGNY) is ftsZ binding.

Belongs to the SulA family. In terms of assembly, interacts with FtsZ. Is rapidly cleaved and degraded by the Lon protease once DNA damage is repaired.

Its function is as follows. Component of the SOS system and an inhibitor of cell division. Accumulation of SulA causes rapid cessation of cell division and the appearance of long, non-septate filaments. In the presence of GTP, binds a polymerization-competent form of FtsZ in a 1:1 ratio, thus inhibiting FtsZ polymerization and therefore preventing it from participating in the assembly of the Z ring. This mechanism prevents the premature segregation of damaged DNA to daughter cells during cell division. This is Cell division inhibitor SulA from Erwinia pyrifoliae (strain DSM 12163 / CIP 106111 / Ep16/96).